A 298-amino-acid chain; its full sequence is ATP synthase gamma chain (298 aa).

This sequence belongs to the ATPase gamma chain family. F-type ATPases have 2 components, CF(1) - the catalytic core - and CF(0) - the membrane proton channel. CF(1) has five subunits: alpha(3), beta(3), gamma(1), delta(1), epsilon(1). CF(0) has three main subunits: a, b and c.

It is found in the cell membrane. Functionally, produces ATP from ADP in the presence of a proton gradient across the membrane. The gamma chain is believed to be important in regulating ATPase activity and the flow of protons through the CF(0) complex. In Parafrankia sp. (strain EAN1pec), this protein is ATP synthase gamma chain.